Consider the following 299-residue polypeptide: Ficolin-3 (299 aa).

Residues 1 to 23 (MDLLWILPSLWLLLLGGPACLKT) form the signal peptide. Residues 44-81 (PSCPGAPGSPGEKGAPGPQGPPGPPGKMGPKGEPGDPV) form a disordered region. Positions 48–80 (GAPGSPGEKGAPGPQGPPGPPGKMGPKGEPGDP) constitute a Collagen-like domain. 6 positions are modified to hydroxyproline: P50, P53, P59, P65, P68, and P77. Residues 61–70 (PQGPPGPPGK) are compositionally biased toward pro residues. The region spanning 84-299 (LRCQEGPRNC…PYRRVRMMLR (216 aa)) is the Fibrinogen C-terminal domain. Cystine bridges form between C86–C110 and C93–C121. N189 is a glycosylation site (N-linked (GlcNAc...) (complex) asparagine). D237, D239, S241, and S243 together coordinate Ca(2+). C245 and C258 are oxidised to a cystine. 258 to 259 (CY) contacts a carbohydrate.

The protein belongs to the ficolin lectin family. Homotrimer. May form an octadecamer consisting of an elementary trimer unit. Does not interact with fibronectin, elastin or zymosan. Interacts with MASP1 and MASP2. In terms of processing, the N-terminus is blocked. In terms of tissue distribution, liver and lung. In liver it is produced by bile duct epithelial cells and hepatocytes. In lung it is produced by both ciliated bronchial epithelial cells and type II alveolar epithelial cells.

The protein resides in the secreted. In terms of biological role, may function in innate immunity through activation of the lectin complement pathway. Calcium-dependent and GlcNAc-binding lectin. Has affinity with GalNAc, GlcNAc, D-fucose, as mono/oligosaccharide and lipopolysaccharides from S.typhimurium and S.minnesota. This chain is Ficolin-3 (FCN3), found in Homo sapiens (Human).